The chain runs to 221 residues: Nucleolar protein 3 (221 aa).

Gly2 carries the N-myristoyl glycine lipid modification. A CARD domain is found at 4-95 (MQERPSETID…MPDPAWDWQH (92 aa)). Residues 20-70 (VETLQADSGLLLDALVARGVLTGPEYEALDALPDAERRVRRLLLLVQSKGE) are essential for interaction with BAX. Residues 107 to 221 (PPCPGHWTPE…GDESEGCENT (115 aa)) form a disordered region. Residues 132 to 143 (EEEEIGGPEDSE) show a composition bias toward acidic residues. Phosphothreonine; by CK2 is present on Thr149. Composition is skewed to acidic residues over residues 165 to 201 (PDLE…EPEP) and 209 to 221 (FQEG…CENT).

As to quaternary structure, oligomerizes (via CARD doamin). Interacts (via CARD domain) with CASP2; inhibits CASP2 activity in a phosphorylation-dependent manner. Interacts with CASP8; decreases CASP8 activity in a mitochondria localization- and phosphorylation-dependent manner and this interaction is dissociated by calcium. Interacts with TFPT; translocates NOL3 into the nucleus and negatively regulated TFPT-induced cell death. Interacts directly (via CARD domain) with FAS and FADD (via DED domain); inhibits death-inducing signaling complex (DISC) assembly by inhibiting the increase in FAS-FADD binding induced by FAS activation. Interacts (via CARD domain) with BAX (via a C-terminal 33 residues); inhibits BAX activation and translocation and consequently cytochrome c release from mitochondria. Interacts with PPM1G; may dephosphorylate NOL3. Interacts (via CARD domain) with BBC3 (via BH3 domain); preventing the association of BBC3 with BCL2 and resulting in activation of CASP8. Interacts (via CARD domain) with BAD(via BH3 domain); preventing the association of BAD with BCL2. Interacts directly (via CARD domain) with TNFRSF1A; inhibits TNF-signaling pathway. Phosphorylation at Thr-149 is required for its antiapoptotic effect by blocking death-inducing signaling complex (DISC) activity through the control of interaction with CASP8. Phosphorylation at Thr-149 results in translocation to mitochondria and this translocation enables the binding to CASP8. Dephosphorylated at Thr-149 by calcineurin; doesn't inhibit the association between FADD and CASP8 and the consequent apoptosis. In terms of processing, polyubiquitinated by MDM2; promoting proteasomal-dependent degradation in response to apoptotic stimuli. In terms of tissue distribution, highly expressed in skeletal muscle, heart and medulla.

Its subcellular location is the cytoplasm. It localises to the mitochondrion. The protein localises to the sarcoplasmic reticulum. It is found in the membrane. Its function is as follows. Apoptosis repressor that blocks multiple modes of cell death. Inhibits extrinsic apoptotic pathways through two different ways. Firstly by interacting with FAS and FADD upon FAS activation blocking death-inducing signaling complex (DISC) assembly. Secondly by interacting with CASP8 in a mitochondria localization- and phosphorylation-dependent manner, limiting the amount of soluble CASP8 available for DISC-mediated activation. Inhibits intrinsic apoptotic pathway in response to a wide range of stresses, through its interaction with BAX resulting in BAX inactivation, preventing mitochondrial dysfunction and release of pro-apoptotic factors. Inhibits calcium-mediated cell death by functioning as a cytosolic calcium buffer, dissociating its interaction with CASP8 and maintaining calcium homeostasis. Negatively regulates oxidative stress-induced apoptosis by phosphorylation-dependent suppression of the mitochondria-mediated intrinsic pathway, by blocking CASP2 activation and BAX translocation. Negatively regulates hypoxia-induced apoptosis in part by inhibiting the release of cytochrome c from mitochondria in a caspase-independent manner. Also inhibits TNF-induced necrosis by preventing TNF-signaling pathway through TNFRSF1A interaction abrogating the recruitment of RIPK1 to complex I. Finally through its role as apoptosis repressor, promotes vascular remodeling through inhibition of apoptosis and stimulation of proliferation, in response to hypoxia. Inhibits too myoblast differentiation through caspase inhibition. This Rattus norvegicus (Rat) protein is Nucleolar protein 3 (Nol3).